Reading from the N-terminus, the 79-residue chain is uncharacterized protein (79 aa).

An N-terminal signal peptide occupies residues 1 to 18 (MQIKNIVAVLATVTAINA). Positions 24–44 (PNATTPNATQPNATQPNTTLP) are disordered. N-linked (GlcNAc...) asparagine glycans are attached at residues Asn-25, Asn-30, Asn-35, and Asn-40. Gly-55 is lipidated: GPI-anchor amidated glycine. The propeptide at 56-79 (EAVVNTMAAGAFGAAIAAGVAFLF) is removed in mature form.

Its subcellular location is the cell membrane. This is an uncharacterized protein from Saccharomyces cerevisiae (strain ATCC 204508 / S288c) (Baker's yeast).